Reading from the N-terminus, the 383-residue chain is MEESSGLSSMKFFSDQHLSYADILLPHEARARIEVSVLNLLRILNSPDPAISDLSLINRKRSNSCINKGILTDVSYIFLSTSFTKSSLTNAKTAKAFVRVWKVMEICFQILLQEKRVTQRELFYKLLCDSPDYFSSQIEVNRSVQDVVALLRCSRYSLGIMASSRGLVAGRLFLQEPGKEAVDCSACGSSGFAITGDLNLLDNTIMRTDARYIIIVEKHAIFHRLVEDRVFNHIPCVFITAKGYPDIATRFFLHRMSTTFPDLPILVLVDWNPAGLAILCTFKFGSIGMGLEAYRYACNVKWIGLRGDDLNLIPEESLVPLKPKDSQIAKSLLSSKILQENYIEELSLMVQTGKRAEIEALYCHGYNYLGKYIATKIVQGKYI.

One can recognise a Topo IIA-type catalytic domain in the interval 24 to 167; it reads LLPHEARARI…LGIMASSRGL (144 aa). Catalysis depends on Tyr124, which acts as the O-(5'-phospho-DNA)-tyrosine intermediate. The Mg(2+) site is built by Glu217 and Asp270.

Belongs to the TOP6A family. In terms of assembly, heterotetramer of 2 SPO11 (SPO11-1 and/or SPO11-2) and 2 MTOPVIB chains. Interacts with MTOPVIB. May form a heterodimer with SPO11-1. Interacts with PRD1. Does not interact with TOP6B. Mg(2+) is required as a cofactor. As to expression, very low expression in flowers and shoots.

The protein localises to the nucleus. The catalysed reaction is ATP-dependent breakage, passage and rejoining of double-stranded DNA.. In terms of biological role, component of a topoisomerase 6 complex specifically required for meiotic recombination. Together with MTOPVIB, mediates DNA cleavage that forms the double-strand breaks (DSB) that initiate meiotic recombination. The complex promotes relaxation of negative and positive supercoiled DNA and DNA decatenation through cleavage and ligation cycles. In Arabidopsis thaliana (Mouse-ear cress), this protein is Meiotic recombination protein SPO11-2 (SPO11-2).